The sequence spans 339 residues: MPKQKVAILGPGSWGTALAQVLNDNGHEVRLWGNIPEQINEINTRHTNSHYFKDIVLDEAIKATLDLKEALADADAILFVVPTKVTRLVAKQVAQVLDHKAVVMHASKGLEPETHERLSTILEEEIPAQLRSEIVVVSGPSHAEETIVRDITLITAASKDITAAKYVQALFSNHYFRLYTNTDVIGVETAGALKNIIAVGAGALHGLGYGDNAKAAVITRGLAEITRLGVKLGADPLTYSGLSGVGDLIVTGTSVHSRNWRAGAALGRGEKLKDIESNMGMVIEGISTTKVAYEIAQELGVYMPITSAIYKSIYEGADIKESILGMMSNEFRSENEWHS.

Residues Ser13, Trp14, and Lys108 each coordinate NADPH. Lys108, Gly139, and Ser141 together coordinate sn-glycerol 3-phosphate. Ala143 serves as a coordination point for NADPH. Sn-glycerol 3-phosphate-binding residues include Lys194, Asp247, Ser257, Arg258, and Asn259. Lys194 serves as the catalytic Proton acceptor. NADPH is bound at residue Arg258. NADPH contacts are provided by Val282 and Glu284.

Belongs to the NAD-dependent glycerol-3-phosphate dehydrogenase family.

The protein localises to the cytoplasm. It carries out the reaction sn-glycerol 3-phosphate + NAD(+) = dihydroxyacetone phosphate + NADH + H(+). The catalysed reaction is sn-glycerol 3-phosphate + NADP(+) = dihydroxyacetone phosphate + NADPH + H(+). The protein operates within membrane lipid metabolism; glycerophospholipid metabolism. In terms of biological role, catalyzes the reduction of the glycolytic intermediate dihydroxyacetone phosphate (DHAP) to sn-glycerol 3-phosphate (G3P), the key precursor for phospholipid synthesis. The protein is Glycerol-3-phosphate dehydrogenase [NAD(P)+] of Streptococcus equi subsp. zooepidemicus (strain H70).